The chain runs to 214 residues: tRNA (guanine-N(7)-)-methyltransferase (214 aa).

The S-adenosyl-L-methionine site is built by E43, E68, D95, and D117. D117 is a catalytic residue. Residues K121, D153, and 190-193 (TEYE) each bind substrate.

The protein belongs to the class I-like SAM-binding methyltransferase superfamily. TrmB family.

The enzyme catalyses guanosine(46) in tRNA + S-adenosyl-L-methionine = N(7)-methylguanosine(46) in tRNA + S-adenosyl-L-homocysteine. It functions in the pathway tRNA modification; N(7)-methylguanine-tRNA biosynthesis. Its function is as follows. Catalyzes the formation of N(7)-methylguanine at position 46 (m7G46) in tRNA. This is tRNA (guanine-N(7)-)-methyltransferase from Staphylococcus aureus (strain JH1).